The sequence spans 70 residues: Small ribosomal subunit protein bS21B (70 aa).

The protein belongs to the bacterial ribosomal protein bS21 family.

This is Small ribosomal subunit protein bS21B from Rhizobium etli (strain ATCC 51251 / DSM 11541 / JCM 21823 / NBRC 15573 / CFN 42).